The following is a 421-amino-acid chain: Serine--tRNA ligase (421 aa).

225–227 (TAE) provides a ligand contact to L-serine. Residues 256–258 (RSE) and Val272 contribute to the ATP site. Glu279 contacts L-serine. 345–348 (ETHS) contacts ATP. Thr380 contacts L-serine.

It belongs to the class-II aminoacyl-tRNA synthetase family. Type-1 seryl-tRNA synthetase subfamily. In terms of assembly, homodimer. A single tRNA molecule binds across the dimer.

It localises to the cytoplasm. The enzyme catalyses tRNA(Ser) + L-serine + ATP = L-seryl-tRNA(Ser) + AMP + diphosphate + H(+). It carries out the reaction tRNA(Sec) + L-serine + ATP = L-seryl-tRNA(Sec) + AMP + diphosphate + H(+). It functions in the pathway aminoacyl-tRNA biosynthesis; selenocysteinyl-tRNA(Sec) biosynthesis; L-seryl-tRNA(Sec) from L-serine and tRNA(Sec): step 1/1. In terms of biological role, catalyzes the attachment of serine to tRNA(Ser). Is also probably able to aminoacylate tRNA(Sec) with serine, to form the misacylated tRNA L-seryl-tRNA(Sec), which will be further converted into selenocysteinyl-tRNA(Sec). This Thermus thermophilus (strain ATCC BAA-163 / DSM 7039 / HB27) protein is Serine--tRNA ligase (serS).